Reading from the N-terminus, the 82-residue chain is Protein ImpC (82 aa).

This sequence belongs to the DinI family.

In terms of biological role, the imp operon is involved in UV protection and mutation, however the ImpC protein is not essential for these functions. The protein is Protein ImpC (impC) of Salmonella typhimurium.